Reading from the N-terminus, the 142-residue chain is UPF0179 protein PH1477 (142 aa).

Belongs to the UPF0179 family.

In Pyrococcus horikoshii (strain ATCC 700860 / DSM 12428 / JCM 9974 / NBRC 100139 / OT-3), this protein is UPF0179 protein PH1477.